The following is a 485-amino-acid chain: MDFLHKATLLEQTLNMEIGEQVKKLATYTFSNFIRCPEVQQAIASGEIRNDMPHLRFVYIFYLFKKIQDFIGDTEVFGIYEKVMGVERANSAKLVDVVQACTEMRPHIQAQICEHIERLTRGQGENVLWEVLRDGVISSSKLLKFVKQQTPDSKIFNPIPIQKNHYVASPVAFGVRNETVVKKLISELVVEEGIGCVTEFGFMLSPNDGIFGVSLDMCTNASMSDHNTVEFTSTTTIYEIKCRYKYLFSKCDYDPIYQAYQKLYNSPGRQELIDFIQSIQKPTVEYVSRGRLPTQNDYLLSFDRSWDFGPPKRKRKLTSGHKITEQCMKYNCYTESKVIILTDPALTSGKIEVKGSFFVDIYINPRHAYYHQCMLQYKIVTNYVQLTKGDSCKHTHPGVFLVSAFFRKRNSADFPKTYIKTERSFVDASVEIPVLLIITPVFVPHGPLVDTLEQAIKFWQVAVKEEFNHWPWAPTSLSAVGDVTP.

This sequence belongs to the herpesviridae alkaline nuclease family. Forms a complex with the DNA polymerase, the DNA polymerase processivity factor, and the major DNA binding protein.

It is found in the host nucleus. It localises to the host cytoplasm. Its function is as follows. Plays a role in processing non linear or branched viral DNA intermediates in order to promote the production of mature packaged unit-length linear progeny viral DNA molecules. Exhibits endonuclease and exonuclease activities and accepts both double-stranded and single-stranded DNA as substrate. Exonuclease digestion of DNA is in the 5'-&gt; 3' direction and the products are 5'-monophosphate nucleosides. Additionally, forms a recombinase with the major DNA-binding protein, which displays strand exchange activity. Also acts as a cytoplasmic RNA endonuclease that induces degradation of the majority of the cellular messenger RNAs during early lytic infection. The resulting inhibition of cellular protein synthesis serves to ensure maximal viral gene expression and evasion from host immune response. Internally cleaves host mRNAs which are then degraded by the cellular exonuclease XRN1. Bypasses therefore the regulatory steps of deadenylation and decapping normally required for XRN1 activation. The chain is Shutoff alkaline exonuclease (37) from Alcelaphine herpesvirus 1 (strain C500) (AlHV-1).